Here is a 450-residue protein sequence, read N- to C-terminus: Protein phosphatase 1F (450 aa).

The PPM-type phosphatase domain occupies 152–409; that stretch reads LVSIHAIRNT…DNITVMVVFL (258 aa). 4 residues coordinate Mn(2+): D194, G195, D356, and D400. The segment at 420 to 450 is disordered; sequence GQGAGGAQADVGSQDLSTGLSELEINTSQRS. Polar residues predominate over residues 433 to 450; the sequence is QDLSTGLSELEINTSQRS. S450 is subject to Phosphoserine.

It belongs to the PP2C family. As to quaternary structure, associates with FEM1B. Requires Mg(2+) as cofactor. Mn(2+) is required as a cofactor.

It carries out the reaction O-phospho-L-seryl-[protein] + H2O = L-seryl-[protein] + phosphate. It catalyses the reaction O-phospho-L-threonyl-[protein] + H2O = L-threonyl-[protein] + phosphate. Its function is as follows. Dephosphorylates and concomitantly deactivates CaM-kinase II activated upon autophosphorylation, and CaM-kinases IV and I activated upon phosphorylation by CaM-kinase kinase. Promotes apoptosis. The protein is Protein phosphatase 1F (Ppm1f) of Rattus norvegicus (Rat).